A 358-amino-acid polypeptide reads, in one-letter code: Peptide chain release factor 1 (358 aa).

The residue at position 235 (Q235) is an N5-methylglutamine.

This sequence belongs to the prokaryotic/mitochondrial release factor family. Methylated by PrmC. Methylation increases the termination efficiency of RF1.

It localises to the cytoplasm. Its function is as follows. Peptide chain release factor 1 directs the termination of translation in response to the peptide chain termination codons UAG and UAA. In Neisseria meningitidis serogroup C (strain 053442), this protein is Peptide chain release factor 1.